We begin with the raw amino-acid sequence, 746 residues long: Protein Niban 2 (746 aa).

Gly2 carries N-myristoyl glycine lipidation. The region spanning 68–192 (RIVFSGNLFQ…WQAVLQDCIR (125 aa)) is the PH domain. 4 positions are modified to phosphoserine: Ser568, Ser574, Ser601, and Ser603. A disordered region spans residues 590–746 (GEEYSNSGGG…EDSAGVQTEF (157 aa)). Thr606 carries the phosphothreonine modification. Phosphoserine occurs at positions 609, 624, 638, 641, 646, 665, 681, 692, and 696. Over residues 671–693 (PLLNGAPAGESPQPKAAPEASSP) the composition is skewed to low complexity. A compositionally biased stretch (polar residues) spans 720–746 (GEQVSSPSSHPALHTTTEDSAGVQTEF).

This sequence belongs to the Niban family. Post-translationally, phosphorylated at Ser-641, Ser-646, Ser-692 and Ser-696 by the BRAF/MKK/ERK signaling cascade. In melanoma cells, the C-terminal phosphorylation may prevent targeting to the plasma membrane. In terms of processing, as apoptosis proceeds, degraded via an proteasome-independent pathway, probably by caspases.

The protein localises to the cytoplasm. It is found in the cytosol. Its subcellular location is the cell junction. It localises to the adherens junction. The protein resides in the membrane. Functionally, may play a role in apoptosis suppression. May promote melanoma cell invasion in vitro. This Homo sapiens (Human) protein is Protein Niban 2.